We begin with the raw amino-acid sequence, 157 residues long: MSRKSKKIKKKVFKDSKYNSQVIAKFVNRMMFDGKKSISETIVYNSIDMLAEKIEEVDKIAAFNKALDNVKPLVEVRSRRVGGATYQVPVEVREERREALAMKWIISAARKASGKSMQEKLANEFVNSYNSTGAAFKKREDTHRMAEANRAFTHYRW.

This sequence belongs to the universal ribosomal protein uS7 family. As to quaternary structure, part of the 30S ribosomal subunit. Contacts proteins S9 and S11.

In terms of biological role, one of the primary rRNA binding proteins, it binds directly to 16S rRNA where it nucleates assembly of the head domain of the 30S subunit. Is located at the subunit interface close to the decoding center, probably blocks exit of the E-site tRNA. The polypeptide is Small ribosomal subunit protein uS7 (Borrelia hermsii (strain HS1 / DAH)).